Reading from the N-terminus, the 224-residue chain is Uridylate kinase (224 aa).

Residue Lys-6–Lys-10 participates in ATP binding. Gly-41 provides a ligand contact to UMP. Positions 42 and 46 each coordinate ATP. UMP is bound by residues Asp-63 and Phe-111–Thr-117. Residues Thr-137, Phe-143, and Asp-146 each coordinate ATP.

This sequence belongs to the UMP kinase family. Homohexamer.

It localises to the cytoplasm. It carries out the reaction UMP + ATP = UDP + ADP. Its pathway is pyrimidine metabolism; CTP biosynthesis via de novo pathway; UDP from UMP (UMPK route): step 1/1. Inhibited by UTP. In terms of biological role, catalyzes the reversible phosphorylation of UMP to UDP. In Metallosphaera sedula (strain ATCC 51363 / DSM 5348 / JCM 9185 / NBRC 15509 / TH2), this protein is Uridylate kinase.